Reading from the N-terminus, the 77-residue chain is Homeodomain-only protein (77 aa).

The segment at residues 7-65 (AALGVRLTEDQVKVLEENFTKVSKHPDETTLMLIAAECGLSEEQTAVWFRMRNAQWRKA) is a DNA-binding region (homeobox; degenerate).

The protein localises to the nucleus. The protein resides in the cytoplasm. Functionally, atypical homeodomain protein which does not bind DNA and is required to modulate cardiac growth and development. May act via an interaction with SRF, leading to modulate the expression of SRF-dependent cardiac-specific genes and cardiac development. May act as a co-chaperone for HSPA1A and HSPA1B chaperone proteins and assist in chaperone-mediated protein refolding. The sequence is that of Homeodomain-only protein (hopx) from Danio rerio (Zebrafish).